A 413-amino-acid polypeptide reads, in one-letter code: MSTRSQSESPVDAPQQGATNGQSASDIHHSGDELLLSADSDIAPTLSVVMPTLNEEGGIAQCIEWVKAALEDMQIYGEVVVADSSTDRTPEIAAENGAIVIEPDGKGYGYAYLYAFERVRGDYIAMGDADCTYDFEELPKLLNMVRSGDADMAMGSRLEGEILPGSMPPLHEHVGNPLLTKFLNVFYGAGVSDAHSGMRVFSRDAWETMDCSSTGMEFASEMIMEAGAKDLEIKEKPITYHPREGEANLESFPDGWRHVRFMLVNAPGYLFSAPGFGLSVIGVLALVLAWSGVEVGGAQFGIHTGIGGGLLTLAGFQLMLFGAFSTVSSDPVRGASDPFTTWFTERISLERGATIGSVVLLCGLAYGGLLAFTWVTSGFSALPIAVADVVATVAVVIGLQMVFGSFLLGSLGE.

Positions 1–27 (MSTRSQSESPVDAPQQGATNGQSASDI) are disordered. Positions 16–25 (QGATNGQSAS) are enriched in polar residues. Transmembrane regions (helical) follow at residues 270–290 (LFSA…VLAW), 304–324 (TGIG…FGAF), 355–375 (IGSV…FTWV), and 389–409 (VVAT…FLLG).

The protein belongs to the glycosyltransferase 2 family.

Its subcellular location is the membrane. It functions in the pathway protein modification; protein glycosylation. It participates in cell surface structure biogenesis; S-layer biogenesis. Functionally, hexosyltransferase involved in N-glycan biosynthetic pathway that takes place under low-salt conditions (1.75 M instead of 3.4 M). Participates in the formation of the tetrasaccharide present at 'Asn-532' of S-layer glycoprotein Csg, consisting of a sulfated hexose, 2 hexoses and rhamnose. Together with Agl5, mediates the addition of sugars 1 and 2 to dolichol phosphate in the tetrasaccharide. The sequence is that of Low-salt glycan biosynthesis hexosyltransferase Agl6 (agl6) from Haloferax volcanii (strain ATCC 29605 / DSM 3757 / JCM 8879 / NBRC 14742 / NCIMB 2012 / VKM B-1768 / DS2) (Halobacterium volcanii).